Here is a 619-residue protein sequence, read N- to C-terminus: TBC domain-containing protein C1952.17c (619 aa).

One can recognise a Rab-GAP TBC domain in the interval 34 to 387 (PDEYSLRAKA…RLWDSIIADQ (354 aa)).

The protein resides in the cytoplasm. Functionally, may act as a GTPase-activating protein for Rab family protein(s). This Schizosaccharomyces pombe (strain 972 / ATCC 24843) (Fission yeast) protein is TBC domain-containing protein C1952.17c.